The primary structure comprises 377 residues: Palmitoyltransferase ZDHHC16 (377 aa).

Over 1–77 (MRGQRSLLLG…VYWLVDNVIR (77 aa)) the chain is Cytoplasmic. The chain crosses the membrane as a helical span at residues 78 to 98 (WFGVVFVVLVIVLTGSIVAIA). Over 99–116 (YLCVLPLILRTYSVPRLC) the chain is Lumenal. Residues 117–137 (WHFFYSHWNLILIVFHYYQAI) traverse the membrane as a helical segment. Residues 138–198 (TTPPGYPPQG…NNCVGHYNHR (61 aa)) are Cytoplasmic-facing. A DHHC domain is found at 155 to 205 (SICKKCIYPKPARTHHCSICNRCVLKMDHHCPWLNNCVGHYNHRYFFSFCF). The S-palmitoyl cysteine intermediate role is filled by cysteine 185. A helical transmembrane segment spans residues 199–219 (YFFSFCFFMTLGCVYCSYGSW). The Lumenal segment spans residues 220–266 (DLFREAYAAIEKMKQLDKNKLQAVANQTYHQTPPPTFSFRERMTHKS). A helical membrane pass occupies residues 267 to 287 (LVYLWFLCSSVALALGALTVW). Residues 288–377 (HAVLISRGET…TAHSASVMAV (90 aa)) lie on the Cytoplasmic side of the membrane.

It belongs to the DHHC palmitoyltransferase family. Interacts with ABL1. Interacts with COPS5/JAB1. As to expression, widely expressed.

It is found in the endoplasmic reticulum membrane. The enzyme catalyses L-cysteinyl-[protein] + hexadecanoyl-CoA = S-hexadecanoyl-L-cysteinyl-[protein] + CoA. Functionally, palmitoyl acyltransferase that mediates palmitoylation of proteins such as PLN and ZDHHC6. Required during embryonic heart development and cardiac function, possibly by mediating palmitoylation of PLN, thereby affecting PLN phosphorylation and homooligomerization. Also required for eye development. Palmitoylates ZDHHC6, affecting the quaternary assembly of ZDHHC6, its localization, stability and function. May play a role in DNA damage response. May be involved in apoptosis regulation. Involved in the proliferation of neural stem cells by regulating the FGF/ERK pathway. In Homo sapiens (Human), this protein is Palmitoyltransferase ZDHHC16.